The primary structure comprises 133 residues: Small ribosomal subunit protein uS8 (133 aa).

The protein belongs to the universal ribosomal protein uS8 family. As to quaternary structure, part of the 30S ribosomal subunit. Contacts proteins S5 and S12.

Functionally, one of the primary rRNA binding proteins, it binds directly to 16S rRNA central domain where it helps coordinate assembly of the platform of the 30S subunit. This is Small ribosomal subunit protein uS8 from Chlamydia abortus (strain DSM 27085 / S26/3) (Chlamydophila abortus).